Reading from the N-terminus, the 224-residue chain is MLIEIPNVFSKQEVSHLREQLDARRWIDGNQTSGAMATTRKRNQQLDKDDPVAVALGQQIMDRLLAHPQFVSAALPLQFYPPLFNRYQGGETFGYHIDNAIRSTPDGMIRTDLSATLFLSEPENYQGGELVIQDTYGQQSIKLSAGSLVLYPSSSLHQVTPVLSGERTAAFMWLQSMVRDEGQRRLLFQLDQSIQSLTAQTAAEQELFNLSGVYHNLLRRWSEL.

Positions Gln78–Ser176 constitute a Fe2OG dioxygenase domain. Residues His96, Asp98, and His157 each contribute to the Fe cation site. 2-oxoglutarate is bound at residue Arg167.

Fe(2+) serves as cofactor. It depends on L-ascorbate as a cofactor.

This chain is PKHD-type hydroxylase Sbal_3634, found in Shewanella baltica (strain OS155 / ATCC BAA-1091).